Reading from the N-terminus, the 46-residue chain is Esculentin-1R (46 aa).

A disulfide bridge connects residues C40 and C46.

Expressed by the skin glands.

Its subcellular location is the secreted. Its function is as follows. Shows antibacterial activity against representative Gram-negative and Gram-positive bacterial species, and hemolytic activity. The sequence is that of Esculentin-1R from Pelophylax ridibundus (Marsh frog).